A 269-amino-acid polypeptide reads, in one-letter code: Formamidopyrimidine-DNA glycosylase (269 aa).

Pro2 (schiff-base intermediate with DNA) is an active-site residue. Glu3 (proton donor) is an active-site residue. Residue Lys57 is the Proton donor; for beta-elimination activity of the active site. The DNA site is built by His90, Arg109, and Lys150. An FPG-type zinc finger spans residues 235–269 (QVYGKAGEPCPECGEAIQEQKIGQRNTFYCSYCQC). The Proton donor; for delta-elimination activity role is filled by Arg259.

It belongs to the FPG family. In terms of assembly, monomer. Zn(2+) serves as cofactor.

It catalyses the reaction Hydrolysis of DNA containing ring-opened 7-methylguanine residues, releasing 2,6-diamino-4-hydroxy-5-(N-methyl)formamidopyrimidine.. The enzyme catalyses 2'-deoxyribonucleotide-(2'-deoxyribose 5'-phosphate)-2'-deoxyribonucleotide-DNA = a 3'-end 2'-deoxyribonucleotide-(2,3-dehydro-2,3-deoxyribose 5'-phosphate)-DNA + a 5'-end 5'-phospho-2'-deoxyribonucleoside-DNA + H(+). In terms of biological role, involved in base excision repair of DNA damaged by oxidation or by mutagenic agents. Acts as a DNA glycosylase that recognizes and removes damaged bases. Has a preference for oxidized purines, such as 7,8-dihydro-8-oxoguanine (8-oxoG). Has AP (apurinic/apyrimidinic) lyase activity and introduces nicks in the DNA strand. Cleaves the DNA backbone by beta-delta elimination to generate a single-strand break at the site of the removed base with both 3'- and 5'-phosphates. This is Formamidopyrimidine-DNA glycosylase from Vibrio vulnificus (strain CMCP6).